Reading from the N-terminus, the 326-residue chain is Undecaprenyl-phosphate 4-deoxy-4-formamido-L-arabinose transferase (326 aa).

2 helical membrane passes run 236–256 and 270–290; these read LSVV…LLIV and VFTL…AMGL.

The protein belongs to the glycosyltransferase 2 family.

Its subcellular location is the cell inner membrane. It carries out the reaction UDP-4-deoxy-4-formamido-beta-L-arabinose + di-trans,octa-cis-undecaprenyl phosphate = 4-deoxy-4-formamido-alpha-L-arabinopyranosyl di-trans,octa-cis-undecaprenyl phosphate + UDP. Its pathway is glycolipid biosynthesis; 4-amino-4-deoxy-alpha-L-arabinose undecaprenyl phosphate biosynthesis; 4-amino-4-deoxy-alpha-L-arabinose undecaprenyl phosphate from UDP-4-deoxy-4-formamido-beta-L-arabinose and undecaprenyl phosphate: step 1/2. It functions in the pathway bacterial outer membrane biogenesis; lipopolysaccharide biosynthesis. Functionally, catalyzes the transfer of 4-deoxy-4-formamido-L-arabinose from UDP to undecaprenyl phosphate. The modified arabinose is attached to lipid A and is required for resistance to polymyxin and cationic antimicrobial peptides. This is Undecaprenyl-phosphate 4-deoxy-4-formamido-L-arabinose transferase from Proteus mirabilis (strain HI4320).